Reading from the N-terminus, the 52-residue chain is MATHKPLGFKLRLASAGKSNRNPPAWVMVKTDRKVTYNTKRRNWRRVKLKLG.

This sequence belongs to the eukaryotic ribosomal protein eL39 family.

The polypeptide is Large ribosomal subunit protein eL39 (Caldivirga maquilingensis (strain ATCC 700844 / DSM 13496 / JCM 10307 / IC-167)).